We begin with the raw amino-acid sequence, 173 residues long: MSSFTHFNEQGRAKMVDITEKEDTIRVAVAQTSVTVNKEIYEKMTNRMIEKGDVLAVAQVAGIMAAKKTSDLIPMCHPLMLKGVDIQFAWHVEEEKALYQLLITVTVKTKGSTGVEMEALTAASVCALTVYDMCKALDKGMVIGPTYLVEKSGGKSGHYQRENSSVGGFANEQ.

Substrate is bound by residues 75–77 and 117–118; these read MCH and ME. Aspartate 132 is an active-site residue. Residues 152–173 form a disordered region; that stretch reads SGGKSGHYQRENSSVGGFANEQ. Over residues 162–173 the composition is skewed to polar residues; the sequence is ENSSVGGFANEQ.

This sequence belongs to the MoaC family. As to quaternary structure, homohexamer; trimer of dimers.

The catalysed reaction is (8S)-3',8-cyclo-7,8-dihydroguanosine 5'-triphosphate = cyclic pyranopterin phosphate + diphosphate. It functions in the pathway cofactor biosynthesis; molybdopterin biosynthesis. Its function is as follows. Catalyzes the conversion of (8S)-3',8-cyclo-7,8-dihydroguanosine 5'-triphosphate to cyclic pyranopterin monophosphate (cPMP). The chain is Cyclic pyranopterin monophosphate synthase from Geobacillus sp. (strain WCH70).